We begin with the raw amino-acid sequence, 140 residues long: Holo-[acyl-carrier-protein] synthase (140 aa).

2 residues coordinate Mg(2+): Asp7 and Glu58.

The protein belongs to the P-Pant transferase superfamily. AcpS family. It depends on Mg(2+) as a cofactor.

It localises to the cytoplasm. The catalysed reaction is apo-[ACP] + CoA = holo-[ACP] + adenosine 3',5'-bisphosphate + H(+). Its function is as follows. Transfers the 4'-phosphopantetheine moiety from coenzyme A to a Ser of acyl-carrier-protein. In Chloroflexus aggregans (strain MD-66 / DSM 9485), this protein is Holo-[acyl-carrier-protein] synthase.